Here is a 252-residue protein sequence, read N- to C-terminus: Small ribosomal subunit protein eS4 (252 aa).

The 63-residue stretch at 43–105 (FPLLIIVRDI…TGETYRVIPV (63 aa)) folds into the S4 RNA-binding domain.

This sequence belongs to the eukaryotic ribosomal protein eS4 family.

This chain is Small ribosomal subunit protein eS4, found in Staphylothermus marinus (strain ATCC 43588 / DSM 3639 / JCM 9404 / F1).